The chain runs to 509 residues: Maturase K (509 aa).

It belongs to the intron maturase 2 family. MatK subfamily.

The protein localises to the plastid. It localises to the chloroplast. Functionally, usually encoded in the trnK tRNA gene intron. Probably assists in splicing its own and other chloroplast group II introns. The protein is Maturase K of Pereskia aculeata (Barbados gooseberry).